We begin with the raw amino-acid sequence, 141 residues long: Nucleoside diphosphate kinase (141 aa).

6 residues coordinate ATP: Lys11, Phe59, Arg87, Thr93, Arg104, and Asn114. His117 (pros-phosphohistidine intermediate) is an active-site residue.

It belongs to the NDK family. Homotetramer. Requires Mg(2+) as cofactor.

The protein localises to the cytoplasm. The enzyme catalyses a 2'-deoxyribonucleoside 5'-diphosphate + ATP = a 2'-deoxyribonucleoside 5'-triphosphate + ADP. It catalyses the reaction a ribonucleoside 5'-diphosphate + ATP = a ribonucleoside 5'-triphosphate + ADP. Major role in the synthesis of nucleoside triphosphates other than ATP. The ATP gamma phosphate is transferred to the NDP beta phosphate via a ping-pong mechanism, using a phosphorylated active-site intermediate. The chain is Nucleoside diphosphate kinase from Cellvibrio japonicus (strain Ueda107) (Pseudomonas fluorescens subsp. cellulosa).